Here is a 515-residue protein sequence, read N- to C-terminus: 3-[(3aS,4S,7aS)-7a-methyl-1,5-dioxo-octahydro-1H-inden-4-yl]propanoyl:CoA ligase (515 aa).

ATP is bound by residues 185-193, Asp398, Arg413, and Lys504; that span reads TSGTTGRSK.

It belongs to the ATP-dependent AMP-binding enzyme family.

It catalyses the reaction 3-[(3aS,4S,7aS)-7a-methyl-1,5-dioxo-octahydro-1H-inden-4-yl]propanoate + ATP + CoA = 3-[(3aS,4S,7aS)-7a-methyl-1,5-dioxo-octahydro-1H-inden-4-yl]propanoyl-CoA + AMP + diphosphate. Involved in the catabolism of the rings C and D of cholesterol. Catalyzes the ATP-dependent CoA thioesterification of 3aalpha-H-4alpha(3'-propanoate)-7abeta-methylhexahydro-1,5-indanedione (HIP). The polypeptide is 3-[(3aS,4S,7aS)-7a-methyl-1,5-dioxo-octahydro-1H-inden-4-yl]propanoyl:CoA ligase (Rhodococcus jostii (strain RHA1)).